The primary structure comprises 68 residues: Tabimmunregulin 12 (68 aa).

An N-terminal signal peptide occupies residues 1 to 24 (MLFKSYVYFLAGLLLVGLFTSCDA). Positions 25–38 (DAQYEELVPGFFRK) are excised as a propeptide.

As to expression, expressed in salivary glands.

Its subcellular location is the secreted. In terms of biological role, horsefly salivary gland immunosuppressant protein that likely inhibits the host inflammatory response by regulation of anti- and pro-inflammatory cytokines. When tested on mouse splenocytes in the presence of LPS, it increases the secretion of the proinflammatory cytokine interleukin-10 (IL10) and decreases the secretion of the proinflammatory cytokine interferon-gamma (IFNG) in a dose-dependent manner. The chain is Tabimmunregulin 12 from Tabanus yao (Horsefly).